We begin with the raw amino-acid sequence, 204 residues long: Protein GrpE (204 aa).

2 stretches are compositionally biased toward basic and acidic residues: residues 1–21 (MEELEKDKIERNEEMSEEVKG) and 36–46 (EEKIETEVEQK). Residues 1–46 (MEELEKDKIERNEEMSEEVKGEGPPSELEQSEEVVEEKIETEVEQK) form a disordered region.

Belongs to the GrpE family. In terms of assembly, homodimer.

The protein resides in the cytoplasm. Participates actively in the response to hyperosmotic and heat shock by preventing the aggregation of stress-denatured proteins, in association with DnaK and GrpE. It is the nucleotide exchange factor for DnaK and may function as a thermosensor. Unfolded proteins bind initially to DnaJ; upon interaction with the DnaJ-bound protein, DnaK hydrolyzes its bound ATP, resulting in the formation of a stable complex. GrpE releases ADP from DnaK; ATP binding to DnaK triggers the release of the substrate protein, thus completing the reaction cycle. Several rounds of ATP-dependent interactions between DnaJ, DnaK and GrpE are required for fully efficient folding. The sequence is that of Protein GrpE from Caldanaerobacter subterraneus subsp. tengcongensis (strain DSM 15242 / JCM 11007 / NBRC 100824 / MB4) (Thermoanaerobacter tengcongensis).